A 162-amino-acid chain; its full sequence is Cyanate hydratase (162 aa).

Catalysis depends on residues arginine 103, glutamate 106, and serine 129.

This sequence belongs to the cyanase family.

The enzyme catalyses cyanate + hydrogencarbonate + 3 H(+) = NH4(+) + 2 CO2. Functionally, catalyzes the reaction of cyanate with bicarbonate to produce ammonia and carbon dioxide. The chain is Cyanate hydratase from Pyrenophora tritici-repentis (strain Pt-1C-BFP) (Wheat tan spot fungus).